Reading from the N-terminus, the 90-residue chain is Small ribosomal subunit protein bS18 (90 aa).

This sequence belongs to the bacterial ribosomal protein bS18 family. As to quaternary structure, part of the 30S ribosomal subunit. Forms a tight heterodimer with protein bS6.

In terms of biological role, binds as a heterodimer with protein bS6 to the central domain of the 16S rRNA, where it helps stabilize the platform of the 30S subunit. This chain is Small ribosomal subunit protein bS18, found in Bordetella bronchiseptica (strain ATCC BAA-588 / NCTC 13252 / RB50) (Alcaligenes bronchisepticus).